Consider the following 207-residue polypeptide: Large ribosomal subunit protein bL25 (207 aa).

It belongs to the bacterial ribosomal protein bL25 family. CTC subfamily. Part of the 50S ribosomal subunit; part of the 5S rRNA/L5/L18/L25 subcomplex. Contacts the 5S rRNA. Binds to the 5S rRNA independently of L5 and L18.

In terms of biological role, this is one of the proteins that binds to the 5S RNA in the ribosome where it forms part of the central protuberance. This Paraburkholderia xenovorans (strain LB400) protein is Large ribosomal subunit protein bL25.